A 159-amino-acid polypeptide reads, in one-letter code: Transcription elongation factor GreA (159 aa).

This sequence belongs to the GreA/GreB family.

Its function is as follows. Necessary for efficient RNA polymerase transcription elongation past template-encoded arresting sites. The arresting sites in DNA have the property of trapping a certain fraction of elongating RNA polymerases that pass through, resulting in locked ternary complexes. Cleavage of the nascent transcript by cleavage factors such as GreA or GreB allows the resumption of elongation from the new 3'terminus. GreA releases sequences of 2 to 3 nucleotides. The sequence is that of Transcription elongation factor GreA from Orientia tsutsugamushi (strain Ikeda) (Rickettsia tsutsugamushi).